We begin with the raw amino-acid sequence, 447 residues long: Tryptophan synthase beta chain (447 aa).

Lys-92 is subject to N6-(pyridoxal phosphate)lysine. Residues 408-447 form a disordered region; the sequence is GLAVKGGEQPKEFSDGPPLGKLAPSGGSAVREATSVGARK.

Belongs to the TrpB family. As to quaternary structure, tetramer of two alpha and two beta chains. It depends on pyridoxal 5'-phosphate as a cofactor.

The catalysed reaction is (1S,2R)-1-C-(indol-3-yl)glycerol 3-phosphate + L-serine = D-glyceraldehyde 3-phosphate + L-tryptophan + H2O. Its pathway is amino-acid biosynthesis; L-tryptophan biosynthesis; L-tryptophan from chorismate: step 5/5. Functionally, the beta subunit is responsible for the synthesis of L-tryptophan from indole and L-serine. In Polaromonas sp. (strain JS666 / ATCC BAA-500), this protein is Tryptophan synthase beta chain.